The following is a 176-amino-acid chain: NAD(P)H-quinone oxidoreductase subunit 6, chloroplastic (176 aa).

Transmembrane regions (helical) follow at residues phenylalanine 10–proline 30, proline 32–leucine 52, alanine 61–methionine 81, leucine 92–methionine 112, and phenylalanine 152–serine 172.

This sequence belongs to the complex I subunit 6 family. As to quaternary structure, NDH is composed of at least 16 different subunits, 5 of which are encoded in the nucleus.

It is found in the plastid. Its subcellular location is the chloroplast thylakoid membrane. The enzyme catalyses a plastoquinone + NADH + (n+1) H(+)(in) = a plastoquinol + NAD(+) + n H(+)(out). It carries out the reaction a plastoquinone + NADPH + (n+1) H(+)(in) = a plastoquinol + NADP(+) + n H(+)(out). NDH shuttles electrons from NAD(P)H:plastoquinone, via FMN and iron-sulfur (Fe-S) centers, to quinones in the photosynthetic chain and possibly in a chloroplast respiratory chain. The immediate electron acceptor for the enzyme in this species is believed to be plastoquinone. Couples the redox reaction to proton translocation, and thus conserves the redox energy in a proton gradient. In Arabidopsis thaliana (Mouse-ear cress), this protein is NAD(P)H-quinone oxidoreductase subunit 6, chloroplastic (ndhG).